The chain runs to 225 residues: ATP synthase subunit a (225 aa).

6 helical membrane-spanning segments follow: residues Leu18–Leu38, Ile73–Ile93, Met100–Ile120, Met126–Ile146, Gly156–Leu176, and Ile187–Met207.

It belongs to the ATPase A chain family. F-type ATPases have 2 components, CF(1) - the catalytic core - and CF(0) - the membrane proton channel. CF(1) has five subunits: alpha(3), beta(3), gamma(1), delta(1), epsilon(1). CF(0) has three main subunits: a, b and c.

The protein localises to the mitochondrion inner membrane. Its function is as follows. Mitochondrial membrane ATP synthase (F(1)F(0) ATP synthase or Complex V) produces ATP from ADP in the presence of a proton gradient across the membrane which is generated by electron transport complexes of the respiratory chain. F-type ATPases consist of two structural domains, F(1) - containing the extramembraneous catalytic core and F(0) - containing the membrane proton channel, linked together by a central stalk and a peripheral stalk. During catalysis, ATP synthesis in the catalytic domain of F(1) is coupled via a rotary mechanism of the central stalk subunits to proton translocation. Key component of the proton channel; it may play a direct role in the translocation of protons across the membrane. The chain is ATP synthase subunit a (ATP6) from Locusta migratoria (Migratory locust).